The chain runs to 723 residues: Polyribonucleotide nucleotidyltransferase (723 aa).

Residues Asp497 and Asp503 each contribute to the Mg(2+) site. The region spanning 564–623 (PRLLSFRIDPELIGTVIGPGGRTIKGITERTNTKIDIEDGGIVTIASHDGAAAEAAQRII) is the KH domain. An S1 motif domain is found at 633-701 (GEVFTGTITR…NRGRINLTLR (69 aa)). Residues 701–723 (RGVPQNGEETQSEPAPTPVAPLN) are disordered.

The protein belongs to the polyribonucleotide nucleotidyltransferase family. It depends on Mg(2+) as a cofactor.

The protein localises to the cytoplasm. The catalysed reaction is RNA(n+1) + phosphate = RNA(n) + a ribonucleoside 5'-diphosphate. Functionally, involved in mRNA degradation. Catalyzes the phosphorolysis of single-stranded polyribonucleotides processively in the 3'- to 5'-direction. The polypeptide is Polyribonucleotide nucleotidyltransferase (Prochlorococcus marinus (strain MIT 9313)).